The sequence spans 336 residues: UDP-N-acetylglucosamine--N-acetylmuramyl-(pentapeptide) pyrophosphoryl-undecaprenol N-acetylglucosamine transferase (336 aa).

Residues threonine 10–glycine 12, asparagine 124, arginine 157, serine 179, and glutamine 277 each bind UDP-N-acetyl-alpha-D-glucosamine.

The protein belongs to the glycosyltransferase 28 family. MurG subfamily.

Its subcellular location is the cell inner membrane. It carries out the reaction di-trans,octa-cis-undecaprenyl diphospho-N-acetyl-alpha-D-muramoyl-L-alanyl-D-glutamyl-meso-2,6-diaminopimeloyl-D-alanyl-D-alanine + UDP-N-acetyl-alpha-D-glucosamine = di-trans,octa-cis-undecaprenyl diphospho-[N-acetyl-alpha-D-glucosaminyl-(1-&gt;4)]-N-acetyl-alpha-D-muramoyl-L-alanyl-D-glutamyl-meso-2,6-diaminopimeloyl-D-alanyl-D-alanine + UDP + H(+). The protein operates within cell wall biogenesis; peptidoglycan biosynthesis. In terms of biological role, cell wall formation. Catalyzes the transfer of a GlcNAc subunit on undecaprenyl-pyrophosphoryl-MurNAc-pentapeptide (lipid intermediate I) to form undecaprenyl-pyrophosphoryl-MurNAc-(pentapeptide)GlcNAc (lipid intermediate II). This chain is UDP-N-acetylglucosamine--N-acetylmuramyl-(pentapeptide) pyrophosphoryl-undecaprenol N-acetylglucosamine transferase, found in Wolinella succinogenes (strain ATCC 29543 / DSM 1740 / CCUG 13145 / JCM 31913 / LMG 7466 / NCTC 11488 / FDC 602W) (Vibrio succinogenes).